A 450-amino-acid chain; its full sequence is Phosphoglucosamine mutase (450 aa).

Residue Ser-103 is the Phosphoserine intermediate of the active site. The Mg(2+) site is built by Ser-103, Asp-243, Asp-245, and Asp-247. Phosphoserine is present on Ser-103.

The protein belongs to the phosphohexose mutase family. Requires Mg(2+) as cofactor. In terms of processing, activated by phosphorylation.

It catalyses the reaction alpha-D-glucosamine 1-phosphate = D-glucosamine 6-phosphate. Its function is as follows. Catalyzes the conversion of glucosamine-6-phosphate to glucosamine-1-phosphate. This Latilactobacillus sakei subsp. sakei (strain 23K) (Lactobacillus sakei subsp. sakei) protein is Phosphoglucosamine mutase.